The sequence spans 91 residues: Small ribosomal subunit protein uS19 (91 aa).

The protein belongs to the universal ribosomal protein uS19 family.

Its function is as follows. Protein S19 forms a complex with S13 that binds strongly to the 16S ribosomal RNA. This chain is Small ribosomal subunit protein uS19, found in Leptothrix cholodnii (strain ATCC 51168 / LMG 8142 / SP-6) (Leptothrix discophora (strain SP-6)).